A 398-amino-acid polypeptide reads, in one-letter code: Serine/threonine-protein phosphatase 4 regulatory subunit 2-B (398 aa).

Residues Ser-138–Asp-398 are disordered. Composition is skewed to polar residues over residues Ser-139 to Arg-149, Pro-156 to Gly-170, and Thr-183 to Leu-193. The span at Met-197 to Leu-211 shows a compositional bias: basic and acidic residues. The segment covering Ala-278–Thr-294 has biased composition (polar residues). A compositionally biased stretch (low complexity) spans Ser-338–Gly-366.

The protein belongs to the PPP4R2 family. As to quaternary structure, serine/threonine-protein phosphatase 4 (PP4) occurs in different assemblies of the catalytic and one or more regulatory subunits.

Functionally, regulatory subunit of serine/threonine-protein phosphatase 4 (PP4). The sequence is that of Serine/threonine-protein phosphatase 4 regulatory subunit 2-B (ppp4r2-b) from Xenopus laevis (African clawed frog).